A 462-amino-acid chain; its full sequence is Glutamate--tRNA ligase (462 aa).

A 'HIGH' region motif is present at residues 11-21; sequence PSPTGFIHLGN. The 'KMSKS' region signature appears at 243 to 247; the sequence is KMSKR. Lys-246 contributes to the ATP binding site.

The protein belongs to the class-I aminoacyl-tRNA synthetase family. Glutamate--tRNA ligase type 1 subfamily. In terms of assembly, monomer.

The protein resides in the cytoplasm. It catalyses the reaction tRNA(Glu) + L-glutamate + ATP = L-glutamyl-tRNA(Glu) + AMP + diphosphate. Its function is as follows. Catalyzes the attachment of glutamate to tRNA(Glu) in a two-step reaction: glutamate is first activated by ATP to form Glu-AMP and then transferred to the acceptor end of tRNA(Glu). The polypeptide is Glutamate--tRNA ligase (Albidiferax ferrireducens (strain ATCC BAA-621 / DSM 15236 / T118) (Rhodoferax ferrireducens)).